A 217-amino-acid chain; its full sequence is ATP synthase F(0) complex subunit a (217 aa).

6 consecutive transmembrane segments (helical) span residues 20–40 (MNWI…WILP), 70–90 (PAFL…FSLF), 100–120 (MVFS…LSTC), 126–146 (MIAH…MTII), 166–188 (LIAG…IIFI), and 193–215 (MIFE…SLYS).

This sequence belongs to the ATPase A chain family. As to quaternary structure, component of the ATP synthase complex composed at least of ATP5F1A/subunit alpha, ATP5F1B/subunit beta, ATP5MC1/subunit c (homooctomer), MT-ATP6/subunit a, MT-ATP8/subunit 8, ATP5ME/subunit e, ATP5MF/subunit f, ATP5MG/subunit g, ATP5MK/subunit k, ATP5MJ/subunit j, ATP5F1C/subunit gamma, ATP5F1D/subunit delta, ATP5F1E/subunit epsilon, ATP5PF/subunit F6, ATP5PB/subunit b, ATP5PD/subunit d, ATP5PO/subunit OSCP. ATP synthase complex consists of a soluble F(1) head domain (subunits alpha(3) and beta(3)) - the catalytic core - and a membrane F(0) domain - the membrane proton channel (subunits c, a, 8, e, f, g, k and j). These two domains are linked by a central stalk (subunits gamma, delta, and epsilon) rotating inside the F1 region and a stationary peripheral stalk (subunits F6, b, d, and OSCP). Interacts with DNAJC30; interaction is direct.

It localises to the mitochondrion inner membrane. The catalysed reaction is H(+)(in) = H(+)(out). In terms of biological role, subunit a, of the mitochondrial membrane ATP synthase complex (F(1)F(0) ATP synthase or Complex V) that produces ATP from ADP in the presence of a proton gradient across the membrane which is generated by electron transport complexes of the respiratory chain. ATP synthase complex consist of a soluble F(1) head domain - the catalytic core - and a membrane F(1) domain - the membrane proton channel. These two domains are linked by a central stalk rotating inside the F(1) region and a stationary peripheral stalk. During catalysis, ATP synthesis in the catalytic domain of F(1) is coupled via a rotary mechanism of the central stalk subunits to proton translocation. With the subunit c (ATP5MC1), forms the proton-conducting channel in the F(0) domain, that contains two crucial half-channels (inlet and outlet) that facilitate proton movement from the mitochondrial intermembrane space (IMS) into the matrix. Protons are taken up via the inlet half-channel and released through the outlet half-channel, following a Grotthuss mechanism. The protein is ATP synthase F(0) complex subunit a of Rhopalosiphum padi (Bird cherry-oat aphid).